The chain runs to 466 residues: Methylenetetrahydrofolate--tRNA-(uracil-5-)-methyltransferase TrmFO (466 aa).

14 to 19 (GGGLAG) provides a ligand contact to FAD.

The protein belongs to the MnmG family. TrmFO subfamily. The cofactor is FAD.

The protein resides in the cytoplasm. The catalysed reaction is uridine(54) in tRNA + (6R)-5,10-methylene-5,6,7,8-tetrahydrofolate + NADH + H(+) = 5-methyluridine(54) in tRNA + (6S)-5,6,7,8-tetrahydrofolate + NAD(+). It carries out the reaction uridine(54) in tRNA + (6R)-5,10-methylene-5,6,7,8-tetrahydrofolate + NADPH + H(+) = 5-methyluridine(54) in tRNA + (6S)-5,6,7,8-tetrahydrofolate + NADP(+). Functionally, catalyzes the folate-dependent formation of 5-methyl-uridine at position 54 (M-5-U54) in all tRNAs. This is Methylenetetrahydrofolate--tRNA-(uracil-5-)-methyltransferase TrmFO from Brucella suis (strain ATCC 23445 / NCTC 10510).